A 464-amino-acid chain; its full sequence is L-cystine uptake protein TcyP (464 aa).

10 helical membrane-spanning segments follow: residues 3–23, 34–54, 73–93, 107–127, 184–204, 225–245, 263–283, 347–367, 371–391, and 395–415; these read TLLV…LYYM, VFTA…IYEP, YVKL…ISAF, GLII…GIAA, PTST…FIGV, IVMR…LALM, FVLA…LLIA, AGIY…IDPL, FILT…GVGG, and FAAL…ALVI.

This sequence belongs to the dicarboxylate/amino acid:cation symporter (DAACS) (TC 2.A.23) family.

The protein resides in the membrane. Mediates uptake of L-cystine, the oxidized form of L-cysteine. The protein is L-cystine uptake protein TcyP of Bacillus cereus (strain ATCC 14579 / DSM 31 / CCUG 7414 / JCM 2152 / NBRC 15305 / NCIMB 9373 / NCTC 2599 / NRRL B-3711).